Reading from the N-terminus, the 1587-residue chain is DNA topoisomerase 2 (1587 aa).

Residues 1–15 (MSDADPFDMSDDDDN) are compositionally biased toward acidic residues. The tract at residues 1-47 (MSDADPFDMSDDDDNSVLSHTPPKKQKKAPTTKKGGSKPLADVENES) is disordered. A compositionally biased stretch (basic residues) spans 22-31 (PPKKQKKAPT). ATP contacts are provided by residues Asn126, Asn155, 183-185 (SSN), and 196-203 (GRNGFGAK). Interaction with DNA stretches follow at residues 381 to 383 (KKK) and 381 to 386 (KKKNKN). Position 415–417 (415–417 (QTK)) interacts with ATP. Residues 461–485 (MLKKTDGGRRSRMNNPKLTDANKAG) are disordered. Residues 492–606 (CTLILTEGDS…SLLKIPEFLI (115 aa)) form the Toprim domain. 3 residues coordinate Mg(2+): Glu498, Asp575, and Asp577. The Topo IIA-type catalytic domain occupies 743–1190 (IPSVVDGLKP…SKEDIWKRDL (448 aa)). Tyr833 (O-(5'-phospho-DNA)-tyrosine intermediate) is an active-site residue. The interaction with DNA stretch occupies residues 1016–1025 (KLSKTMTTTN). Residues 1204–1587 (EARRQRKVAN…PRPRRPRRRS (384 aa)) are disordered. The span at 1271 to 1280 (LSFLGKSSAK) shows a compositional bias: low complexity. Over residues 1308-1320 (PKSEPKADPKPKD) the composition is skewed to basic and acidic residues. The segment covering 1321 to 1334 (EDEDIVMEDSDIEE) has biased composition (acidic residues). Basic and acidic residues predominate over residues 1348-1364 (VKPESEDGQAKIAEAPK). The segment covering 1365–1375 (RGRAAAKPKPK) has biased composition (basic residues). Composition is skewed to acidic residues over residues 1379-1391 (EDEEDELDDDDFM) and 1419-1430 (SDSDSDNGDDLL). 2 stretches are compositionally biased toward polar residues: residues 1441–1451 (GSTNGASTSDS) and 1466–1475 (GLKTTASKAS). Residues 1512-1521 (DNEPEDDDDE) show a composition bias toward acidic residues. Positions 1524–1542 (KPAAKGKAAAKGKSTAAAA) are enriched in low complexity. The span at 1558-1568 (PKPPPRLPCPL) shows a compositional bias: pro residues. The segment covering 1571–1587 (RRTHRSNPRPRRPRRRS) has biased composition (basic residues).

The protein belongs to the type II topoisomerase family. Homodimer. It depends on Mg(2+) as a cofactor. Mn(2+) serves as cofactor. The cofactor is Ca(2+).

It is found in the nucleus. It catalyses the reaction ATP-dependent breakage, passage and rejoining of double-stranded DNA.. Control of topological states of DNA by transient breakage and subsequent rejoining of DNA strands. Topoisomerase II makes double-strand breaks. The protein is DNA topoisomerase 2 (TOP2) of Penicillium chrysogenum (Penicillium notatum).